A 235-amino-acid polypeptide reads, in one-letter code: MGQKINPIGLRLGINRTWDSRWFAGKNEYGKLLHEDVKIREILHKELKQAAVARIVIERPHKKCRVTIHSARPGVVIGKKGADIDKLRKKVADITSSDVVINIVEIRKPELDATLVAESIAQQLERRVAFRRAMKRAVQSAMRLGAEGIRINCSGRLGGAEIARMEWYREGRVPLHTLRADIDYGVATAFTTFGTCGVKVWIFKGEILEHDPMAQDKRMAEGDGGGSSRPRRDAA.

The 69-residue stretch at Ile39–Arg107 folds into the KH type-2 domain. A disordered region spans residues Gln215–Ala235.

Belongs to the universal ribosomal protein uS3 family. As to quaternary structure, part of the 30S ribosomal subunit. Forms a tight complex with proteins S10 and S14.

In terms of biological role, binds the lower part of the 30S subunit head. Binds mRNA in the 70S ribosome, positioning it for translation. The chain is Small ribosomal subunit protein uS3 from Rhodopseudomonas palustris (strain ATCC BAA-98 / CGA009).